The sequence spans 290 residues: Light-independent protochlorophyllide reductase iron-sulfur ATP-binding protein (290 aa).

ATP contacts are provided by residues 10 to 15 and lysine 39; that span reads GIGKST. Serine 14 provides a ligand contact to Mg(2+). [4Fe-4S] cluster is bound by residues cysteine 95 and cysteine 129. ATP is bound at residue 180-181; the sequence is NR.

The protein belongs to the NifH/BchL/ChlL family. Homodimer. Protochlorophyllide reductase is composed of three subunits; ChlL, ChlN and ChlB. It depends on [4Fe-4S] cluster as a cofactor.

It localises to the plastid. The protein resides in the chloroplast. The enzyme catalyses chlorophyllide a + oxidized 2[4Fe-4S]-[ferredoxin] + 2 ADP + 2 phosphate = protochlorophyllide a + reduced 2[4Fe-4S]-[ferredoxin] + 2 ATP + 2 H2O. It participates in porphyrin-containing compound metabolism; chlorophyll biosynthesis (light-independent). In terms of biological role, component of the dark-operative protochlorophyllide reductase (DPOR) that uses Mg-ATP and reduced ferredoxin to reduce ring D of protochlorophyllide (Pchlide) to form chlorophyllide a (Chlide). This reaction is light-independent. The L component serves as a unique electron donor to the NB-component of the complex, and binds Mg-ATP. The sequence is that of Light-independent protochlorophyllide reductase iron-sulfur ATP-binding protein from Zygnema circumcarinatum (Green alga).